The chain runs to 368 residues: 3-dehydroquinate synthase (368 aa).

NAD(+)-binding positions include D71–K76, G105–D109, T129–T130, K142, K151, and T169–T172. Residues E184, H247, and H264 each coordinate Zn(2+).

The protein belongs to the sugar phosphate cyclases superfamily. Dehydroquinate synthase family. Co(2+) is required as a cofactor. Requires Zn(2+) as cofactor. It depends on NAD(+) as a cofactor.

The protein localises to the cytoplasm. The catalysed reaction is 7-phospho-2-dehydro-3-deoxy-D-arabino-heptonate = 3-dehydroquinate + phosphate. Its pathway is metabolic intermediate biosynthesis; chorismate biosynthesis; chorismate from D-erythrose 4-phosphate and phosphoenolpyruvate: step 2/7. Its function is as follows. Catalyzes the conversion of 3-deoxy-D-arabino-heptulosonate 7-phosphate (DAHP) to dehydroquinate (DHQ). The chain is 3-dehydroquinate synthase from Ralstonia pickettii (strain 12J).